The primary structure comprises 525 residues: BTB/POZ domain-containing protein At1g50280 (525 aa).

One can recognise a BTB domain in the interval 5-79 (NDLKINLNGQ…CYHNGEILID (75 aa)). An NPH3 domain is found at 200 to 466 (EWWFEDMTNL…IEALKSRCGN (267 aa)).

The protein belongs to the NPH3 family.

The protein operates within protein modification; protein ubiquitination. Functionally, may act as a substrate-specific adapter of an E3 ubiquitin-protein ligase complex (CUL3-RBX1-BTB) which mediates the ubiquitination and subsequent proteasomal degradation of target proteins. The protein is BTB/POZ domain-containing protein At1g50280 of Arabidopsis thaliana (Mouse-ear cress).